Reading from the N-terminus, the 466-residue chain is Citrate synthase, mitochondrial (466 aa).

Residues 1–27 constitute a mitochondrion transit peptide; the sequence is MALLTAAARLLGTKNASCLVLAARHAS. The SIFI-degron signature appears at 2 to 21; the sequence is ALLTAAARLLGTKNASCLVL. An N6-succinyllysine modification is found at Lys-57. At Lys-76 the chain carries N6-acetyllysine; alternate. Residue Lys-76 is modified to N6-succinyllysine; alternate. Lys-103 and Lys-193 each carry N6-succinyllysine. Residue His-301 is part of the active site. N6-acetyllysine; alternate is present on residues Lys-321 and Lys-327. An N6-succinyllysine; alternate mark is found at Lys-321 and Lys-327. His-347 is an active-site residue. Residue Arg-356 participates in oxaloacetate binding. Position 375 is an N6-acetyllysine; alternate (Lys-375). Lys-375 is subject to N6-succinyllysine; alternate. An N6-acetyllysine modification is found at Lys-382. The residue at position 393 (Lys-393) is an N6-acetyllysine; alternate. Lys-393 carries the post-translational modification N6-succinyllysine; alternate. An N6,N6,N6-trimethyllysine modification is found at Lys-395. The active site involves Asp-402. Oxaloacetate contacts are provided by Arg-428 and Arg-448. Lys-450 carries the N6-succinyllysine modification. Position 459 is an N6-acetyllysine; alternate (Lys-459). Lys-459 carries the post-translational modification N6-succinyllysine; alternate.

Belongs to the citrate synthase family. Homodimer. Post-translationally, methylated. Trimethylation at Lys-395 by CSKMT decreases citrate synthase activity. In response to mitochondrial stress, the precursor protein is ubiquitinated by the SIFI complex in the cytoplasm before mitochondrial import, leading to its degradation. Within the SIFI complex, UBR4 initiates ubiquitin chain that are further elongated or branched by KCMF1.

It is found in the mitochondrion matrix. The enzyme catalyses oxaloacetate + acetyl-CoA + H2O = citrate + CoA + H(+). It participates in carbohydrate metabolism; tricarboxylic acid cycle; isocitrate from oxaloacetate: step 1/2. Key enzyme of the Krebs tricarboxylic acid cycle which catalyzes the synthesis of citrate from acetyl coenzyme A and oxaloacetate. The polypeptide is Citrate synthase, mitochondrial (CS) (Macaca fascicularis (Crab-eating macaque)).